The sequence spans 214 residues: 3-isopropylmalate dehydratase small subunit (214 aa).

Belongs to the LeuD family. LeuD type 1 subfamily. In terms of assembly, heterodimer of LeuC and LeuD.

The enzyme catalyses (2R,3S)-3-isopropylmalate = (2S)-2-isopropylmalate. The protein operates within amino-acid biosynthesis; L-leucine biosynthesis; L-leucine from 3-methyl-2-oxobutanoate: step 2/4. In terms of biological role, catalyzes the isomerization between 2-isopropylmalate and 3-isopropylmalate, via the formation of 2-isopropylmaleate. The sequence is that of 3-isopropylmalate dehydratase small subunit from Pseudomonas entomophila (strain L48).